A 138-amino-acid chain; its full sequence is Phosphoribosyl-AMP cyclohydrolase (138 aa).

The segment at 1–23 (MSEQSAPSPTPAAELSSDPASPL) is disordered. Residue Asp100 coordinates Mg(2+). Cys101 is a Zn(2+) binding site. Mg(2+) contacts are provided by Asp102 and Asp104. Residues Cys117 and Cys124 each contribute to the Zn(2+) site.

The protein belongs to the PRA-CH family. In terms of assembly, homodimer. Mg(2+) is required as a cofactor. Requires Zn(2+) as cofactor.

It localises to the cytoplasm. The enzyme catalyses 1-(5-phospho-beta-D-ribosyl)-5'-AMP + H2O = 1-(5-phospho-beta-D-ribosyl)-5-[(5-phospho-beta-D-ribosylamino)methylideneamino]imidazole-4-carboxamide. It functions in the pathway amino-acid biosynthesis; L-histidine biosynthesis; L-histidine from 5-phospho-alpha-D-ribose 1-diphosphate: step 3/9. Its function is as follows. Catalyzes the hydrolysis of the adenine ring of phosphoribosyl-AMP. This chain is Phosphoribosyl-AMP cyclohydrolase, found in Paenarthrobacter aurescens (strain TC1).